We begin with the raw amino-acid sequence, 633 residues long: Threonine--tRNA ligase (633 aa).

Residues 1-61 (MINIYFNNNL…TENCTFEVIT (61 aa)) form the TGS domain. The interval 242-533 (DHRKIGKELE…LIEHHSGKFP (292 aa)) is catalytic. 3 residues coordinate Zn(2+): cysteine 333, histidine 384, and histidine 510.

This sequence belongs to the class-II aminoacyl-tRNA synthetase family. As to quaternary structure, homodimer. Requires Zn(2+) as cofactor.

It is found in the cytoplasm. It catalyses the reaction tRNA(Thr) + L-threonine + ATP = L-threonyl-tRNA(Thr) + AMP + diphosphate + H(+). Functionally, catalyzes the attachment of threonine to tRNA(Thr) in a two-step reaction: L-threonine is first activated by ATP to form Thr-AMP and then transferred to the acceptor end of tRNA(Thr). Also edits incorrectly charged L-seryl-tRNA(Thr). The chain is Threonine--tRNA ligase from Ehrlichia canis (strain Jake).